The sequence spans 237 residues: GATA zinc finger domain-containing protein 18 (237 aa).

Composition is skewed to low complexity over residues 1 to 28 (MAHN…KNNN) and 87 to 118 (NTST…PNSN). 3 disordered regions span residues 1-31 (MAHN…NSEY), 78-119 (PTNT…NSNL), and 140-186 (FEEG…GGCS). The segment covering 140–151 (FEEGDDEEETSS) has biased composition (acidic residues). The segment covering 152–167 (DSDSSSSSSTSSSSSE) has biased composition (low complexity). The GATA-type zinc-finger motif lies at 185-212 (CSICKTQETPYWRKGKDGDKTVYLCNAC).

The protein is GATA zinc finger domain-containing protein 18 (gtaR) of Dictyostelium discoideum (Social amoeba).